The following is a 331-amino-acid chain: Ornithine carbamoyltransferase (331 aa).

Residues 55–58 (STRT), glutamine 82, arginine 106, and 133–136 (HPTQ) contribute to the carbamoyl phosphate site. L-ornithine-binding positions include asparagine 166, aspartate 230, and 234–235 (SM). Carbamoyl phosphate contacts are provided by residues 272–273 (CL) and arginine 317.

Belongs to the aspartate/ornithine carbamoyltransferase superfamily. OTCase family.

It localises to the cytoplasm. The enzyme catalyses carbamoyl phosphate + L-ornithine = L-citrulline + phosphate + H(+). Its pathway is amino-acid biosynthesis; L-arginine biosynthesis; L-arginine from L-ornithine and carbamoyl phosphate: step 1/3. Reversibly catalyzes the transfer of the carbamoyl group from carbamoyl phosphate (CP) to the N(epsilon) atom of ornithine (ORN) to produce L-citrulline. The chain is Ornithine carbamoyltransferase (argF) from Neisseria meningitidis serogroup B (strain ATCC BAA-335 / MC58).